Here is a 559-residue protein sequence, read N- to C-terminus: GTP diphosphokinase CRSH2, chloroplastic (559 aa).

The transit peptide at 1 to 37 (MASAGGEVVVVDPAAAAVAPDVEHHAPAPRLTPAGSG) directs the protein to the chloroplast. One can recognise an HD domain in the interval 87–187 (SLARALIVAA…LELAIRLDAM (101 aa)). EF-hand domains follow at residues 449–484 (ASAGNIERAFRLLDKNGDGRISMEELTELMEDLGAG) and 486–518 (KDAEELMRLLDDNNDGSLSSDEFALFQKRVELK). Ca(2+)-binding residues include D462, N464, D466, R468, E473, D496, N498, D500, S502, and E507.

This sequence belongs to the RelA/SpoT family. As to expression, expressed in shoots.

The protein resides in the plastid. Its subcellular location is the chloroplast. The enzyme catalyses GTP + ATP = guanosine 3'-diphosphate 5'-triphosphate + AMP. With respect to regulation, activated by calcium. Possesses calcium-dependent ppGpp (guanosine 3'-diphosphate 5'-diphosphate) synthetase activity in vitro and is able to functionally complement E.coli relA mutants. May be involved in a rapid plant ppGpp-mediated response to pathogens and other stresses. This chain is GTP diphosphokinase CRSH2, chloroplastic, found in Oryza sativa subsp. japonica (Rice).